The primary structure comprises 252 residues: Adapter protein MecA (252 aa).

The protein belongs to the MecA family. In terms of assembly, homodimer.

In terms of biological role, enables the recognition and targeting of unfolded and aggregated proteins to the ClpC protease or to other proteins involved in proteolysis. The protein is Adapter protein MecA of Streptococcus uberis (strain ATCC BAA-854 / 0140J).